The sequence spans 271 residues: 3'-phosphoadenosine 5'-phosphate phosphatase (271 aa).

Residues Glu73, Asp91, Leu93, Asp94, and Asp216 each coordinate Mg(2+). Substrate is bound at residue Glu73. Substrate-binding positions include 93–96 (LDGT) and Asp216.

It belongs to the inositol monophosphatase superfamily. As to quaternary structure, homodimer. It depends on Mg(2+) as a cofactor.

The enzyme catalyses adenosine 3',5'-bisphosphate + H2O = AMP + phosphate. It catalyses the reaction beta-D-fructose 1,6-bisphosphate + H2O = beta-D-fructose 6-phosphate + phosphate. The catalysed reaction is a myo-inositol phosphate + H2O = myo-inositol + phosphate. The protein operates within sulfur metabolism; sulfate assimilation. Functionally, phosphatase with a broad specificity. Its primary physiological function is to dephosphorylate 3'-phosphoadenosine 5'-phosphate (PAP) and 3'-phosphoadenosine 5'-phosphosulfate (PAPS). Thus, plays a role in mycobacterial sulfur metabolism, since it can serve as a key regulator of the sulfate assimilation pathway by controlling the pools of PAP and PAPS in the cell. To a lesser extent, is also able to hydrolyze inositol 1-phosphate (I-1-P), fructose 1,6-bisphosphate (FBP) (to fructose 6-phosphate (F-6-P)) and AMP in vitro, but this might not be significant in vivo. The sequence is that of 3'-phosphoadenosine 5'-phosphate phosphatase (cysQ) from Mycobacterium leprae (strain TN).